A 294-amino-acid chain; its full sequence is Glycine--tRNA ligase alpha subunit (294 aa).

It belongs to the class-II aminoacyl-tRNA synthetase family. Tetramer of two alpha and two beta subunits.

It localises to the cytoplasm. The catalysed reaction is tRNA(Gly) + glycine + ATP = glycyl-tRNA(Gly) + AMP + diphosphate. The protein is Glycine--tRNA ligase alpha subunit of Oleidesulfovibrio alaskensis (strain ATCC BAA-1058 / DSM 17464 / G20) (Desulfovibrio alaskensis).